The chain runs to 190 residues: Potassium-transporting ATPase KdpC subunit (190 aa).

The helical transmembrane segment at 10 to 30 (TFLFLLLITGGVYPLLTTALG) threads the bilayer.

This sequence belongs to the KdpC family. In terms of assembly, the system is composed of three essential subunits: KdpA, KdpB and KdpC.

The protein resides in the cell inner membrane. Functionally, part of the high-affinity ATP-driven potassium transport (or Kdp) system, which catalyzes the hydrolysis of ATP coupled with the electrogenic transport of potassium into the cytoplasm. This subunit acts as a catalytic chaperone that increases the ATP-binding affinity of the ATP-hydrolyzing subunit KdpB by the formation of a transient KdpB/KdpC/ATP ternary complex. This is Potassium-transporting ATPase KdpC subunit from Escherichia coli O7:K1 (strain IAI39 / ExPEC).